Reading from the N-terminus, the 646-residue chain is Peptidylprolyl isomerase domain and WD repeat-containing protein 1 (646 aa).

Residues 1-30 (MAAESGSDFQQRRRRRRDPEEPEKTELSER) form a disordered region. N-acetylalanine is present on Ala-2. A compositionally biased stretch (basic and acidic residues) spans 17–30 (RDPEEPEKTELSER). WD repeat units lie at residues 88 to 126 (MHRD…IEFV), 131 to 170 (SHLG…MINM), 221 to 260 (LHTS…YKFP), and 278 to 319 (KCKA…RVFD). The segment covering 455 to 478 (EPEDTKSADSDRDVFNEKPSKEEV) has biased composition (basic and acidic residues). The disordered stretch occupies residues 455–490 (EPEDTKSADSDRDVFNEKPSKEEVMAATQAEGPKRV). Positions 490–645 (VSDSAIIHTS…EDVSIINITV (156 aa)) constitute a PPIase cyclophilin-type domain.

Belongs to the cyclophilin-type PPIase family. PPIL1 subfamily. As to quaternary structure, identified in the spliceosome C complex.

It is found in the nucleus. The enzyme catalyses [protein]-peptidylproline (omega=180) = [protein]-peptidylproline (omega=0). With respect to regulation, inhibited by cyclosporin A (CsA). Functionally, PPIase that catalyzes the cis-trans isomerization of proline imidic peptide bonds in oligopeptides and may therefore assist protein folding. May be involved in pre-mRNA splicing. In Pongo abelii (Sumatran orangutan), this protein is Peptidylprolyl isomerase domain and WD repeat-containing protein 1.